Reading from the N-terminus, the 279-residue chain is Movement protein (279 aa).

Residues P256–S266 are compositionally biased toward low complexity. Residues P256–L279 form a disordered region. Residues R267 to L279 show a composition bias toward polar residues.

This sequence belongs to the cucumovirus movement protein family.

It localises to the host cell junction. The protein localises to the host plasmodesma. Functionally, transports viral genome to neighboring plant cells directly through plasmosdesmata, without any budding. The movement protein allows efficient cell to cell propagation, by bypassing the host cell wall barrier. Acts by forming a tubular structure at the host plasmodesmata, enlarging it enough to allow free passage of virion capsids. This chain is Movement protein, found in Cucumis sativus (Cucumber).